We begin with the raw amino-acid sequence, 576 residues long: Pentatricopeptide repeat-containing protein At1g79080, chloroplastic (576 aa).

Residues 1 to 37 constitute a chloroplast transit peptide; the sequence is MSTLLNSVLSMASPESSPRKAVGFVSHIPSGFLHFSS. PPR repeat units follow at residues 105-139, 140-174, 175-209, 210-244, 245-279, 280-314, 315-349, 352-386, 387-417, 422-456, 457-487, 493-527, and 528-562; these read NVAHSTQLLYDLCKANRLKKAIRVIELMVSSGIIP, DASAYTYLVNQLCKRGNVGYAMQLVEKMEDHGYPS, NTVTYNALVRGLCMLGSLNQSLQFVERLMQKGLAP, NAFTYSFLLEAAYKERGTDEAVKLLDEIIVKGGEP, NLVSYNVLLTGFCKEGRTDDAMALFRELPAKGFKA, NVVSYNILLRCLCCDGRWEEANSLLAEMDGGDRAP, SVVTYNILINSLAFHGRTEQALQVLKEMSKGNHQF, TATSYNPVIARLCKEGKVDLVVKCLDEMIYRRCKP, NEGTYNAIGSLCEHNSKVQEAFYIIQSLSNK, THDFYKSVITSLCRKGNTFAAFQLLYEMTRCGFDP, DAHTYSALIRGLCLEGMFTGAMEVLSIMEES, TVDNFNAMILGLCKIRRTDLAMEVFEMMVEKKRMP, and NETTYAILVEGIAHEDELELAKEVLDELRLRKVIG.

It belongs to the PPR family. P subfamily.

The protein resides in the plastid. The protein localises to the chloroplast. The chain is Pentatricopeptide repeat-containing protein At1g79080, chloroplastic from Arabidopsis thaliana (Mouse-ear cress).